A 94-amino-acid polypeptide reads, in one-letter code: Putative regulatory protein LEPBI_I0950 (94 aa).

Belongs to the RemA family.

The chain is Putative regulatory protein LEPBI_I0950 from Leptospira biflexa serovar Patoc (strain Patoc 1 / ATCC 23582 / Paris).